The sequence spans 188 residues: Elongation factor P-like protein (188 aa).

It belongs to the elongation factor P family.

This Xanthomonas campestris pv. campestris (strain 8004) protein is Elongation factor P-like protein.